A 245-amino-acid polypeptide reads, in one-letter code: 1-(5-phosphoribosyl)-5-[(5-phosphoribosylamino)methylideneamino] imidazole-4-carboxamide isomerase (245 aa).

Catalysis depends on Asp8, which acts as the Proton acceptor. Asp130 acts as the Proton donor in catalysis.

This sequence belongs to the HisA/HisF family.

Its subcellular location is the cytoplasm. The enzyme catalyses 1-(5-phospho-beta-D-ribosyl)-5-[(5-phospho-beta-D-ribosylamino)methylideneamino]imidazole-4-carboxamide = 5-[(5-phospho-1-deoxy-D-ribulos-1-ylimino)methylamino]-1-(5-phospho-beta-D-ribosyl)imidazole-4-carboxamide. Its pathway is amino-acid biosynthesis; L-histidine biosynthesis; L-histidine from 5-phospho-alpha-D-ribose 1-diphosphate: step 4/9. In Pseudomonas putida (strain GB-1), this protein is 1-(5-phosphoribosyl)-5-[(5-phosphoribosylamino)methylideneamino] imidazole-4-carboxamide isomerase.